Here is a 332-residue protein sequence, read N- to C-terminus: Fructose-1,6-bisphosphatase class 1 (332 aa).

Mg(2+) contacts are provided by Glu-91, Asp-112, Leu-114, and Asp-115. Residues 115-118 (DGSS), Asn-208, Tyr-241, and Lys-271 contribute to the substrate site. Glu-277 contributes to the Mg(2+) binding site.

Belongs to the FBPase class 1 family. As to quaternary structure, homotetramer. Mg(2+) serves as cofactor.

The protein localises to the cytoplasm. The enzyme catalyses beta-D-fructose 1,6-bisphosphate + H2O = beta-D-fructose 6-phosphate + phosphate. Its pathway is carbohydrate biosynthesis; Calvin cycle. The protein is Fructose-1,6-bisphosphatase class 1 of Chlorobium phaeobacteroides (strain DSM 266 / SMG 266 / 2430).